A 170-amino-acid chain; its full sequence is Adenine phosphoribosyltransferase (170 aa).

This sequence belongs to the purine/pyrimidine phosphoribosyltransferase family. As to quaternary structure, homodimer.

It is found in the cytoplasm. The catalysed reaction is AMP + diphosphate = 5-phospho-alpha-D-ribose 1-diphosphate + adenine. The protein operates within purine metabolism; AMP biosynthesis via salvage pathway; AMP from adenine: step 1/1. Functionally, catalyzes a salvage reaction resulting in the formation of AMP, that is energically less costly than de novo synthesis. This is Adenine phosphoribosyltransferase from Bacillus subtilis (strain 168).